The primary structure comprises 469 residues: 1-aminocyclopropane-1-carboxylate synthase 8 (469 aa).

2 residues coordinate substrate: Glu47 and Tyr85. Position 272 is an N6-(pyridoxal phosphate)lysine (Lys272).

It belongs to the class-I pyridoxal-phosphate-dependent aminotransferase family. In terms of assembly, homodimer and heterodimer. In vivo, the relevance of heterodimerization with other ACS enzymes is however unsure. Interacts with GRF3. Requires pyridoxal 5'-phosphate as cofactor. Post-translationally, may be processed at its C-terminus. In terms of tissue distribution, expressed in roots. Expressed at low level in flowers and siliques.

The catalysed reaction is S-adenosyl-L-methionine = 1-aminocyclopropane-1-carboxylate + S-methyl-5'-thioadenosine + H(+). The protein operates within alkene biosynthesis; ethylene biosynthesis via S-adenosyl-L-methionine; ethylene from S-adenosyl-L-methionine: step 1/2. 1-aminocyclopropane-1-carboxylate synthase (ACS) enzymes catalyze the conversion of S-adenosyl-L-methionine (SAM) into 1-aminocyclopropane-1-carboxylate (ACC), a direct precursor of ethylene. The protein is 1-aminocyclopropane-1-carboxylate synthase 8 (ACS8) of Arabidopsis thaliana (Mouse-ear cress).